Consider the following 397-residue polypeptide: 4-hydroxybenzoate polyprenyltransferase, mitochondrial (397 aa).

The N-terminal 14 residues, 1-14 (MFAVRHLLKSRKHF), are a transit peptide targeting the mitochondrion. A run of 9 helical transmembrane segments spans residues 96-116 (IGTYLLFWPCAWSIALSADAG), 121-141 (LTMLGLFGTGALIMRGAGCTI), 169-189 (FDAIVFLSAQLSLGLLVLVQL), 190-210 (NWQSILLGASSLGLVITYPLM), 213-233 (VTYWPQLVLGMAFNWGALLGW), 242-262 (LAACLPLYLSGVCWTIVYDTI), 289-309 (VWLSGFTAAMLTGLSTAGWAC), 313-333 (LPYYAAVGVVGAHLVQQIYSL), and 345-365 (FLSNHQVGLILFLGIVLGTLL).

The protein belongs to the UbiA prenyltransferase family. Mg(2+) serves as cofactor.

It is found in the mitochondrion inner membrane. The catalysed reaction is an all-trans-polyprenyl diphosphate + 4-hydroxybenzoate = a 4-hydroxy-3-(all-trans-polyprenyl)benzoate + diphosphate. It participates in cofactor biosynthesis; ubiquinone biosynthesis. Its function is as follows. Catalyzes the prenylation of para-hydroxybenzoate (PHB) with an all-trans polyprenyl group. Mediates the second step in the final reaction sequence of coenzyme Q (CoQ) biosynthesis, which is the condensation of the polyisoprenoid side chain with PHB, generating the first membrane-bound Q intermediate. This is 4-hydroxybenzoate polyprenyltransferase, mitochondrial from Drosophila pseudoobscura pseudoobscura (Fruit fly).